The sequence spans 570 residues: Zinc finger and BTB domain-containing protein 44 (570 aa).

A Glycyl lysine isopeptide (Lys-Gly) (interchain with G-Cter in SUMO2) cross-link involves residue lysine 4. Residues 31–98 enclose the BTB domain; the sequence is CDITIRVQDK…AYTATLSINT (68 aa). Serine 135, serine 159, serine 161, serine 165, serine 191, and serine 194 each carry phosphoserine. Disordered stretches follow at residues 194 to 220 and 243 to 267; these read SPVKCGTQTSSPQVLNSSASYSENRNQ and EKVKQAENTRTLELPGPSETGRRMA. Residues 199–220 are compositionally biased toward polar residues; sequence GTQTSSPQVLNSSASYSENRNQ. Residue threonine 200 is modified to Phosphothreonine. A Glycyl lysine isopeptide (Lys-Gly) (interchain with G-Cter in SUMO2) cross-link involves residue lysine 290. Positions 295-369 are disordered; the sequence is SDEEVHEEVS…NAPPDDDDRL (75 aa). Positions 304–318 are enriched in low complexity; that stretch reads SQPVSASQSSLSDQQ. Residues 352-361 are compositionally biased toward polar residues; it reads TLQSTSSTNA. 4 C2H2-type zinc fingers span residues 399–421, 427–449, 455–479, and 487–511; these read FQCPTCGVRFTRIQNLKQHMLIH, FQCDRCGKKFTRAYSLKMHRLKH, FRCQICSATFTSFGEYKHHMRVSRH, and YECKTCGAMFTNSGNLIVHLRSLNH.

It localises to the nucleus. Functionally, may be involved in transcriptional regulation. This chain is Zinc finger and BTB domain-containing protein 44 (ZBTB44), found in Homo sapiens (Human).